Consider the following 460-residue polypeptide: CWF19-like protein 2 homolog (460 aa).

Disordered regions lie at residues 38–78, 103–175, and 193–227; these read GKTF…EDEK, KLES…TGTA, and RRHDDESVDDIAEMQKGKKKSDEKDKKRKEKESIK. Over residues 54-68 the composition is skewed to polar residues; sequence GSQQVRNDVMKSSDS. Positions 84 to 106 form a coiled coil; that stretch reads KILKAEMKGDTDLVKKLKRKLES. Basic and acidic residues-rich tracts occupy residues 113–131, 139–172, and 205–227; these read EPPKSKSKEVTMMRRDREG, RRSDSDRHGEGSSRMRREYEKSQDLDSMVREEKT, and EMQKGKKKSDEKDKKRKEKESIK. Residues 210 to 231 adopt a coiled-coil conformation; that stretch reads KKKSDEKDKKRKEKESIKEHKR.

It belongs to the CWF19 family.

In Caenorhabditis elegans, this protein is CWF19-like protein 2 homolog.